The primary structure comprises 451 residues: Chromosomal replication initiator protein DnaA (451 aa).

Residues 1-93 (MENIDDLWNK…HNQEEEALPE (93 aa)) form a domain I, interacts with DnaA modulators region. The segment at 88 to 108 (EEALPEQTPQTPPEKDVAGQS) is disordered. A domain II region spans residues 94 to 113 (QTPQTPPEKDVAGQSTLSQT). A domain III, AAA+ region region spans residues 114 to 330 (MLNDKYTFNT…GALIRVVAYS (217 aa)). 4 residues coordinate ATP: glycine 158, glycine 160, lysine 161, and threonine 162. The domain IV, binds dsDNA stretch occupies residues 331 to 451 (SLINQDMNAD…VQAITEQLRQ (121 aa)).

This sequence belongs to the DnaA family. Oligomerizes as a right-handed, spiral filament on DNA at oriC.

The protein resides in the cytoplasm. Functionally, plays an essential role in the initiation and regulation of chromosomal replication. ATP-DnaA binds to the origin of replication (oriC) to initiate formation of the DNA replication initiation complex once per cell cycle. Binds the DnaA box (a 9 base pair repeat at the origin) and separates the double-stranded (ds)DNA. Forms a right-handed helical filament on oriC DNA; dsDNA binds to the exterior of the filament while single-stranded (ss)DNA is stabiized in the filament's interior. The ATP-DnaA-oriC complex binds and stabilizes one strand of the AT-rich DNA unwinding element (DUE), permitting loading of DNA polymerase. After initiation quickly degrades to an ADP-DnaA complex that is not apt for DNA replication. Binds acidic phospholipids. This chain is Chromosomal replication initiator protein DnaA, found in Shouchella clausii (strain KSM-K16) (Alkalihalobacillus clausii).